An 839-amino-acid polypeptide reads, in one-letter code: Taste receptor type 1 member 2 (839 aa).

A signal peptide spans 1–19 (MGTRATTICSLFFLLWVLA). At 20-566 (EPAENSDFYL…VFLEWHEAPT (547 aa)) the chain is on the extracellular side. Asparagine 84, asparagine 248, asparagine 292, asparagine 312, asparagine 368, asparagine 407, asparagine 428, asparagine 487, and asparagine 527 each carry an N-linked (GlcNAc...) asparagine glycan. Residues 567–587 (IAVALLAALGFLSTLAILVIF) form a helical membrane-spanning segment. Residues 588–602 (WRHFQTPIVRSAGGP) lie on the Cytoplasmic side of the membrane. A helical transmembrane segment spans residues 603-623 (MCFLMLTLLLVAYMVVPVYVG). Topologically, residues 624–635 (PPKVSTCLCRQA) are extracellular. Residues 636 to 656 (LFPLCFTICISCIAVRSFQIV) form a helical membrane-spanning segment. Topologically, residues 657-681 (CAFKMASRFPRAYSYWVRYQGPYVS) are cytoplasmic. Residues 682–702 (MAFITVLKMVIVVIGMLATGL) traverse the membrane as a helical segment. Topologically, residues 703-727 (SPTTRTDPDDPKITIVSCNPNYRNS) are extracellular. Residues 728 to 748 (LLFNTSLDLLLSVVGFSFAYM) traverse the membrane as a helical segment. At 749–760 (GKELPTNYNEAK) the chain is on the cytoplasmic side. A helical membrane pass occupies residues 761–781 (FITLSMTFYFTSSVSLCTFMS). Topologically, residues 782–784 (AYS) are extracellular. A helical membrane pass occupies residues 785-805 (GVLVTIVDLLVTVLNLLAISL). The Cytoplasmic portion of the chain corresponds to 806 to 839 (GYFGPKCYMILFYPERNTPAYFNSMIQGYTMRRD).

It belongs to the G-protein coupled receptor 3 family. TAS1R subfamily. Forms heterodimers with TAS1R3.

Its subcellular location is the cell membrane. In terms of biological role, putative taste receptor. TAS1R2/TAS1R3 recognizes diverse natural and synthetic sweeteners. This Gorilla gorilla gorilla (Western lowland gorilla) protein is Taste receptor type 1 member 2 (TAS1R2).